The chain runs to 240 residues: UDP-2,3-diacylglucosamine hydrolase (240 aa).

Positions 8, 10, 41, 78, and 113 each coordinate Mn(2+). Substrate is bound at residue 78 to 79 (NR). Substrate contacts are provided by Asp121, Ser159, Asn163, Lys166, and His194. Residues His194 and His196 each contribute to the Mn(2+) site.

Belongs to the LpxH family. The cofactor is Mn(2+).

The protein localises to the cell inner membrane. The enzyme catalyses UDP-2-N,3-O-bis[(3R)-3-hydroxytetradecanoyl]-alpha-D-glucosamine + H2O = 2-N,3-O-bis[(3R)-3-hydroxytetradecanoyl]-alpha-D-glucosaminyl 1-phosphate + UMP + 2 H(+). The protein operates within glycolipid biosynthesis; lipid IV(A) biosynthesis; lipid IV(A) from (3R)-3-hydroxytetradecanoyl-[acyl-carrier-protein] and UDP-N-acetyl-alpha-D-glucosamine: step 4/6. Functionally, hydrolyzes the pyrophosphate bond of UDP-2,3-diacylglucosamine to yield 2,3-diacylglucosamine 1-phosphate (lipid X) and UMP by catalyzing the attack of water at the alpha-P atom. Involved in the biosynthesis of lipid A, a phosphorylated glycolipid that anchors the lipopolysaccharide to the outer membrane of the cell. The chain is UDP-2,3-diacylglucosamine hydrolase from Shewanella baltica (strain OS195).